A 550-amino-acid chain; its full sequence is Dihydroxy-acid dehydratase (550 aa).

Aspartate 78 lines the Mg(2+) pocket. Cysteine 119 contributes to the [2Fe-2S] cluster binding site. Mg(2+) contacts are provided by aspartate 120 and lysine 121. Lysine 121 is subject to N6-carboxylysine. Cysteine 192 contacts [2Fe-2S] cluster. A Mg(2+)-binding site is contributed by glutamate 440. Serine 466 serves as the catalytic Proton acceptor.

This sequence belongs to the IlvD/Edd family. Homodimer. [2Fe-2S] cluster serves as cofactor. The cofactor is Mg(2+).

It carries out the reaction (2R)-2,3-dihydroxy-3-methylbutanoate = 3-methyl-2-oxobutanoate + H2O. The catalysed reaction is (2R,3R)-2,3-dihydroxy-3-methylpentanoate = (S)-3-methyl-2-oxopentanoate + H2O. The protein operates within amino-acid biosynthesis; L-isoleucine biosynthesis; L-isoleucine from 2-oxobutanoate: step 3/4. Its pathway is amino-acid biosynthesis; L-valine biosynthesis; L-valine from pyruvate: step 3/4. Functionally, functions in the biosynthesis of branched-chain amino acids. Catalyzes the dehydration of (2R,3R)-2,3-dihydroxy-3-methylpentanoate (2,3-dihydroxy-3-methylvalerate) into 2-oxo-3-methylpentanoate (2-oxo-3-methylvalerate) and of (2R)-2,3-dihydroxy-3-methylbutanoate (2,3-dihydroxyisovalerate) into 2-oxo-3-methylbutanoate (2-oxoisovalerate), the penultimate precursor to L-isoleucine and L-valine, respectively. The sequence is that of Dihydroxy-acid dehydratase from Thermodesulfovibrio yellowstonii (strain ATCC 51303 / DSM 11347 / YP87).